Reading from the N-terminus, the 88-residue chain is Arminin 1a (88 aa).

A signal peptide spans 1–18 (MKTVLAFLFLPFIAFTHA). The propeptide occupies 19–57 (ESYEDVKEEIKNEAEKEIFEDLEEESDALDSSVREFNDA). A Valine amide modification is found at Val85.

This sequence belongs to the arminin family. Expressed in entodermal epithelium along the body column.

It is found in the secreted. Its subcellular location is the target cell membrane. Functionally, antimicrobial peptide with a broad-spectrum antimicrobial activity. Shows very strong bactericidal activity against B.megaterium (MBC=0.1 uM), E.coli (MBC=0.2 uM), S.aureus (MBC=0.4 uM), methicillin-resistant S.aureus (MRSA) (MBC=0.4-0.8 uM), vancomycin-resistant enterococci (VRE) (E.faecalis (MBC=1.6 uM), and E.faecium (MBC=0.4-0.8 uM)), and extended-spectrum beta-lactamase (ESBL)-producing enterobacteriaceae strains (K.pneumoniae (MBC=0.4-0.8 uM), E.coli (MBC=0.2-0.4 uM)). Keeps its antibacterial activity under a wide range of salt concentrations that mimic physiological conditions of human blood, which is surprising, since Hydra is an obligate freshwater animal with nearly no salt tolerance. Does not affect red blood cells. The sequence is that of Arminin 1a from Hydra vulgaris (Hydra).